Here is a 37-residue protein sequence, read N- to C-terminus: Large ribosomal subunit protein bL36 (37 aa).

The protein belongs to the bacterial ribosomal protein bL36 family.

The sequence is that of Large ribosomal subunit protein bL36 from Nostoc punctiforme (strain ATCC 29133 / PCC 73102).